The sequence spans 823 residues: Zygotic DNA replication licensing factor mcm6-A (823 aa).

The C4-type zinc-finger motif lies at 159–186 (CLDCQTLVRDVEQQFKYTQPSICRNPVC). The MCM domain occupies 347-554 (LYHNLCTSLF…TDYAIARRIV (208 aa)). 397-404 (GDPSTAKS) provides a ligand contact to ATP. The Arginine finger motif lies at 529–532 (SRFD). The interval 663-710 (PDVNLDQDDEHEPEDETQEGTNGDAEVPNGVNGHVNGINGHSQESNAA) is disordered. Acidic residues predominate over residues 667–680 (LDQDDEHEPEDETQ). Residues 691 to 703 (NGVNGHVNGINGH) show a composition bias toward low complexity.

This sequence belongs to the MCM family. As to quaternary structure, component of the mcm2-7 complex (RLF-M). The complex forms a toroidal hexameric ring with the proposed subunit order mcm2-mcm6-mcm4-mcm7-mcm3-mcm5 (By simililarity). Begins to associate with zmcm3, mcm4 and mcm7 into mcm complexes at the neurula stage. May replace mmcm6 in the complex that functions during licensing of DNA replication.

It localises to the nucleus. It carries out the reaction ATP + H2O = ADP + phosphate + H(+). In terms of biological role, acts as a component of the mcm2-7 complex (mcm complex) which is the putative replicative helicase essential for 'once per cell cycle' DNA replication initiation and elongation in eukaryotic cells. The active ATPase sites in the mcm2-7 ring are formed through the interaction surfaces of two neighboring subunits such that a critical structure of a conserved arginine finger motif is provided in trans relative to the ATP-binding site of the Walker A box of the adjacent subunit. The six ATPase active sites, however, are likely to contribute differentially to the complex helicase activity. The existence of maternal and zygotic forms of mcm3 and mcm6 suggests that specific forms of mcm2-7 complexes may be used during different stages of development. May replace mmcm6 in the mcm2-7 complex. This chain is Zygotic DNA replication licensing factor mcm6-A (zmcm6-a), found in Xenopus laevis (African clawed frog).